Reading from the N-terminus, the 3092-residue chain is Inhibitory regulator protein IRA1 (3092 aa).

2 disordered regions span residues 375–430 (HLHH…MASL) and 450–487 (LGQA…NSAN). Positions 379–400 (SSSSSKTTNTNSPNSISKTSIK) are enriched in low complexity. Residues 401–430 (QSSVNASGNVSPSQFSTGNDASPTSPMASL) show a composition bias toward polar residues. Residues 455–487 (TSTSTTAATTKTDADTPSTMNTNNNNNNNNSAN) are compositionally biased toward low complexity. Phosphoserine is present on residues Ser-497 and Ser-915. Disordered stretches follow at residues 946-988 (SGVP…VLSS) and 1003-1023 (TILK…ADDK). Residues 965 to 988 (QSPYSSPPQLQQSDLPSPLSVLSS) show a composition bias toward low complexity. Position 1342 is a phosphoserine (Ser-1342). One can recognise a Ras-GAP domain in the interval 1725 to 1930 (NASHILVTEL…DKIFNFLSEL (206 aa)). Ser-1753 and Ser-3004 each carry phosphoserine; by PKA.

The protein localises to the cytoplasm. Its function is as follows. Inhibitory regulator of the Ras-cyclic AMP pathway in S.cerevisiae. Stimulates the GTPase activity of Ras proteins. This is Inhibitory regulator protein IRA1 (IRA1) from Saccharomyces cerevisiae (strain ATCC 204508 / S288c) (Baker's yeast).